A 278-amino-acid polypeptide reads, in one-letter code: Ras-related protein Rab-40A-like (278 aa).

GTP is bound by residues G26, K27, and S28. S28 is a Mg(2+) binding site. The segment at 41–49 (SPYSHLGGI) is switch-I. D69 provides a ligand contact to Mg(2+). 3 residues coordinate GTP: G72, N126, and R127. The tract at residues 72-88 (GQGRFCTIFRSYSRGAQ) is switch-II. An SOCS box domain is found at 175–228 (LLRHRLNWLGRPSKVLSLQDLCCRTIVSCTPVHLVDKLPLPIALRSHLKSFSMA). C270 carries S-palmitoyl cysteine lipidation. C275 carries the S-geranylgeranyl cysteine lipid modification.

Belongs to the small GTPase superfamily. Rab family. Requires Mg(2+) as cofactor. Expressed in brain, lung, heart, skeletal muscle, kidney and liver. Highest expression in brain. Expressed in fetal brain and kidney.

It is found in the membrane. The protein localises to the cytoplasm. The protein resides in the mitochondrion. It catalyses the reaction GTP + H2O = GDP + phosphate + H(+). The protein operates within protein modification; protein ubiquitination. Regulated by guanine nucleotide exchange factors (GEFs) which promote the exchange of bound GDP for free GTP. Regulated by GTPase activating proteins (GAPs) which increase the GTP hydrolysis activity. Inhibited by GDP dissociation inhibitors (GDIs). Its function is as follows. May act as substrate-recognition component of the ECS(RAB40) E3 ubiquitin ligase complex which mediates the ubiquitination and subsequent proteasomal degradation of target proteins. The Rab40 subfamily belongs to the Rab family that are key regulators of intracellular membrane trafficking, from the formation of transport vesicles to their fusion with membranes. Rabs cycle between an inactive GDP-bound form and an active GTP-bound form that is able to recruit to membranes different sets of downstream effectors directly responsible for vesicle formation, movement, tethering and fusion. The sequence is that of Ras-related protein Rab-40A-like from Homo sapiens (Human).